Reading from the N-terminus, the 259-residue chain is Large ribosomal subunit protein uL3m (259 aa).

A mitochondrion-targeting transit peptide spans 1 to 15 (MQSRFLISPTLIRTF). The span at 176–197 (ASHGASLSHRTPGSTGQNTTPS) shows a compositional bias: polar residues. The disordered stretch occupies residues 176–208 (ASHGASLSHRTPGSTGQNTTPSRVLPGRKMAGH).

Belongs to the universal ribosomal protein uL3 family. As to quaternary structure, component of the mitochondrial large ribosomal subunit (mt-LSU). Mature yeast 74S mitochondrial ribosomes consist of a small (37S) and a large (54S) subunit. The 37S small subunit contains a 15S ribosomal RNA (15S mt-rRNA) and at least 32 different proteins. The 54S large subunit contains a 21S rRNA (21S mt-rRNA) and at least 45 different proteins.

The protein localises to the cytoplasm. The protein resides in the mitochondrion. Its function is as follows. Component of the mitochondrial ribosome (mitoribosome), a dedicated translation machinery responsible for the synthesis of mitochondrial genome-encoded proteins, including at least some of the essential transmembrane subunits of the mitochondrial respiratory chain. The mitoribosomes are attached to the mitochondrial inner membrane and translation products are cotranslationally integrated into the membrane. The polypeptide is Large ribosomal subunit protein uL3m (mrpl9) (Schizosaccharomyces pombe (strain 972 / ATCC 24843) (Fission yeast)).